The following is a 1374-amino-acid chain: DNA-directed RNA polymerase subunit beta' (1374 aa).

The interval 1–47 (MTSTSPKSRKPSTKTTKSKSKSKSKSKAAKAAAAGASPALARTPPQF) is disordered. Basic residues predominate over residues 7 to 28 (KSRKPSTKTTKSKSKSKSKSKA). The segment covering 29 to 39 (AKAAAAGASPA) has biased composition (low complexity). Zn(2+) is bound by residues Cys258, Cys325, Cys332, and Cys335. Residues 1344 to 1374 (RPTGENELEEEQLPDPSALEGLQQEGLLTEE) are disordered. Residues 1362–1374 (LEGLQQEGLLTEE) show a composition bias toward low complexity.

The protein belongs to the RNA polymerase beta' chain family. RpoC2 subfamily. In terms of assembly, in cyanobacteria the RNAP catalytic core is composed of 2 alpha, 1 beta, 1 beta', 1 gamma and 1 omega subunit. When a sigma factor is associated with the core the holoenzyme is formed, which can initiate transcription. The cofactor is Zn(2+).

The enzyme catalyses RNA(n) + a ribonucleoside 5'-triphosphate = RNA(n+1) + diphosphate. DNA-dependent RNA polymerase catalyzes the transcription of DNA into RNA using the four ribonucleoside triphosphates as substrates. The sequence is that of DNA-directed RNA polymerase subunit beta' from Prochlorococcus marinus (strain MIT 9313).